A 90-amino-acid chain; its full sequence is UPF0297 protein OEOE_1166 (90 aa).

The protein belongs to the UPF0297 family.

This Oenococcus oeni (strain ATCC BAA-331 / PSU-1) protein is UPF0297 protein OEOE_1166.